The sequence spans 589 residues: Serine/threonine-protein kinase STE7 homolog (589 aa).

The span at 1–18 (MTRTTRIDTQEATKHKDL) shows a compositional bias: basic and acidic residues. Disordered stretches follow at residues 1–162 (MTRT…DPDN) and 185–233 (RQHY…ASSQ). Low complexity predominate over residues 24–33 (PLSLSSNPNP). The segment covering 57–69 (VKSTSGSLRSSDM) has biased composition (polar residues). Over residues 92-121 (PTASSSATSTPTSNITGSSSASSIQFAQKS) the composition is skewed to low complexity. 2 stretches are compositionally biased toward polar residues: residues 127 to 136 (IVSQTLSRPS) and 144 to 162 (SGYS…DPDN). Residues 185–203 (RQHYQNSHHHLPTTNRKRQ) are compositionally biased toward basic residues. The segment covering 206 to 220 (ISSISPTKSSAASSS) has biased composition (low complexity). A compositionally biased stretch (polar residues) spans 221–233 (LEPQIQSLPASSQ). The Protein kinase domain maps to 249–565 (LLTLKQLGSG…QLLEDKEHFF (317 aa)). Residues 255-263 (LGSGNSGSV) and lysine 278 each bind ATP. Aspartate 374 (proton acceptor) is an active-site residue. The residue at position 402 (serine 402) is a Phosphoserine. The residue at position 408 (threonine 408) is a Phosphothreonine. A disordered region spans residues 473 to 499 (IAAERNGQNSPSRSRKNKQKGNGYNSY).

The protein belongs to the protein kinase superfamily. STE Ser/Thr protein kinase family. MAP kinase kinase subfamily.

It catalyses the reaction L-seryl-[protein] + ATP = O-phospho-L-seryl-[protein] + ADP + H(+). The enzyme catalyses L-threonyl-[protein] + ATP = O-phospho-L-threonyl-[protein] + ADP + H(+). It carries out the reaction L-tyrosyl-[protein] + ATP = O-phospho-L-tyrosyl-[protein] + ADP + H(+). The sequence is that of Serine/threonine-protein kinase STE7 homolog (HST7) from Candida albicans (strain SC5314 / ATCC MYA-2876) (Yeast).